Reading from the N-terminus, the 126-residue chain is MPEPAKSAPAPKKGSKKALTKAQKKDGKKRKRSRKESYSVYVYKVLKQVHPDTGISSKAMGIMNSFVNDIFERIAGEASRLAHYNKRSTITSREIQTAVRLLLPGELAKHAVSEGTKAVTKYTSSK.

Residues 1 to 12 (MPEPAKSAPAPK) show a composition bias toward low complexity. The disordered stretch occupies residues 1-36 (MPEPAKSAPAPKKGSKKALTKAQKKDGKKRKRSRKE). An N-acetylproline modification is found at Pro-2. Glu-3 bears the ADP-ribosyl glutamic acid mark. Residue Lys-6 is modified to N6-(2-hydroxyisobutyryl)lysine; alternate. Lys-6 bears the N6-(beta-hydroxybutyryl)lysine; alternate mark. An N6-acetyllysine; alternate modification is found at Lys-6. Lys-6 carries the post-translational modification N6-butyryllysine; alternate. Position 6 is an N6-crotonyllysine; alternate (Lys-6). The residue at position 6 (Lys-6) is an N6-lactoyllysine; alternate. Residue Lys-6 forms a Glycyl lysine isopeptide (Lys-Gly) (interchain with G-Cter in SUMO2); alternate linkage. Ser-7 bears the ADP-ribosylserine mark. Lys-12 bears the N6-(beta-hydroxybutyryl)lysine; alternate mark. Residues Lys-12 and Lys-13 each carry the N6-acetyllysine; alternate modification. 2 positions are modified to N6-crotonyllysine; alternate: Lys-12 and Lys-13. Residue Lys-12 is modified to N6-lactoyllysine; alternate. Lys-13 carries the post-translational modification N6-(2-hydroxyisobutyryl)lysine; alternate. Ser-15 is modified (phosphoserine; by STK4/MST1). N6-acetyllysine; alternate is present on residues Lys-16, Lys-17, Lys-21, and Lys-24. N6-crotonyllysine; alternate occurs at positions 16, 17, 21, and 24. 4 positions are modified to N6-lactoyllysine; alternate: Lys-16, Lys-17, Lys-21, and Lys-24. Lys-17 bears the N6-glutaryllysine; alternate mark. 2 positions are modified to N6-(2-hydroxyisobutyryl)lysine; alternate: Lys-21 and Lys-24. An N6-(beta-hydroxybutyryl)lysine; alternate modification is found at Lys-21. An N6-butyryllysine; alternate modification is found at Lys-21. Lys-21 participates in a covalent cross-link: Glycyl lysine isopeptide (Lys-Gly) (interchain with G-Cter in SUMO2); alternate. Lys-25 carries the post-translational modification N6-(2-hydroxyisobutyryl)lysine. Residue Lys-35 is modified to N6-(2-hydroxyisobutyryl)lysine; alternate. The residue at position 35 (Lys-35) is an N6-(beta-hydroxybutyryl)lysine; alternate. Position 35 is an N6-crotonyllysine; alternate (Lys-35). N6-glutaryllysine; alternate is present on Lys-35. The residue at position 35 (Lys-35) is an N6-succinyllysine; alternate. Lys-35 is covalently cross-linked (Glycyl lysine isopeptide (Lys-Gly) (interchain with G-Cter in ubiquitin); alternate). Glu-36 is subject to PolyADP-ribosyl glutamic acid. At Ser-37 the chain carries Phosphoserine; by AMPK. Lys-44, Lys-47, and Lys-58 each carry N6-(2-hydroxyisobutyryl)lysine; alternate. At Lys-44 the chain carries N6-lactoyllysine; alternate. Residues Lys-44 and Lys-47 each carry the N6-glutaryllysine; alternate modification. Lys-47 carries the post-translational modification N6-methyllysine; alternate. An N6,N6-dimethyllysine; alternate modification is found at Lys-58. A Dimethylated arginine modification is found at Arg-80. An N6-(2-hydroxyisobutyryl)lysine; alternate modification is found at Lys-86. An N6-acetyllysine; alternate modification is found at Lys-86. Residue Lys-86 is modified to N6-lactoyllysine; alternate. At Lys-86 the chain carries N6,N6,N6-trimethyllysine; alternate. Omega-N-methylarginine is present on residues Arg-87 and Arg-93. Residue Lys-109 is modified to N6-(2-hydroxyisobutyryl)lysine; alternate. Lys-109 is subject to N6-(beta-hydroxybutyryl)lysine; alternate. An N6-lactoyllysine; alternate modification is found at Lys-109. Residue Lys-109 is modified to N6-glutaryllysine; alternate. Lys-109 bears the N6-methyllysine; alternate mark. Ser-113 carries O-linked (GlcNAc) serine glycosylation. Thr-116 bears the Phosphothreonine mark. An N6-(2-hydroxyisobutyryl)lysine; alternate mark is found at Lys-117 and Lys-121. Lys-117 is modified (N6-(beta-hydroxybutyryl)lysine; alternate). Residues Lys-117 and Lys-121 each carry the N6-lactoyllysine; alternate modification. Lys-117 and Lys-121 each carry N6-glutaryllysine; alternate. 2 positions are modified to N6-succinyllysine; alternate: Lys-117 and Lys-121. The residue at position 117 (Lys-117) is an N6-methylated lysine; alternate. A Glycyl lysine isopeptide (Lys-Gly) (interchain with G-Cter in ubiquitin); alternate cross-link involves residue Lys-121.

The protein belongs to the histone H2B family. The nucleosome is a histone octamer containing two molecules each of H2A, H2B, H3 and H4 assembled in one H3-H4 heterotetramer and two H2A-H2B heterodimers. The octamer wraps approximately 147 bp of DNA. In terms of processing, monoubiquitination at Lys-35 (H2BK34Ub) by the MSL1/MSL2 dimer is required for histone H3 'Lys-4' (H3K4me) and 'Lys-79' (H3K79me) methylation and transcription activation at specific gene loci, such as HOXA9 and MEIS1 loci. Similarly, monoubiquitination at Lys-121 (H2BK120Ub) by the RNF20/40 complex gives a specific tag for epigenetic transcriptional activation and is also prerequisite for histone H3 'Lys-4' and 'Lys-79' methylation. It also functions cooperatively with the FACT dimer to stimulate elongation by RNA polymerase II. H2BK120Ub also acts as a regulator of mRNA splicing: deubiquitination by USP49 is required for efficient cotranscriptional splicing of a large set of exons. Post-translationally, phosphorylated on Ser-15 (H2BS14ph) by STK4/MST1 during apoptosis; which facilitates apoptotic chromatin condensation. Also phosphorylated on Ser-15 in response to DNA double strand breaks (DSBs), and in correlation with somatic hypermutation and immunoglobulin class-switch recombination. Phosphorylation at Ser-37 (H2BS36ph) by AMPK in response to stress promotes transcription. GlcNAcylation at Ser-113 promotes monoubiquitination of Lys-121. It fluctuates in response to extracellular glucose, and associates with transcribed genes. In terms of processing, ADP-ribosylated by PARP1 or PARP2 on Ser-7 (H2BS6ADPr) in response to DNA damage. H2BS6ADPr promotes recruitment of CHD1L. Mono-ADP-ribosylated on Glu-3 (H2BE2ADPr) by PARP3 in response to single-strand breaks. Poly ADP-ribosylation on Glu-36 (H2BE35ADPr) by PARP1 regulates adipogenesis: it inhibits phosphorylation at Ser-37 (H2BS36ph), thereby blocking expression of pro-adipogenetic genes. Post-translationally, crotonylation (Kcr) is specifically present in male germ cells and marks testis-specific genes in post-meiotic cells, including X-linked genes that escape sex chromosome inactivation in haploid cells. Crotonylation marks active promoters and enhancers and confers resistance to transcriptional repressors. It is also associated with post-meiotically activated genes on autosomes. Hydroxybutyrylation of histones is induced by starvation. In terms of processing, lactylated in macrophages by EP300/P300 by using lactoyl-CoA directly derived from endogenous or exogenous lactate, leading to stimulates gene transcription.

Its subcellular location is the nucleus. It is found in the chromosome. In terms of biological role, core component of nucleosome. Nucleosomes wrap and compact DNA into chromatin, limiting DNA accessibility to the cellular machineries which require DNA as a template. Histones thereby play a central role in transcription regulation, DNA repair, DNA replication and chromosomal stability. DNA accessibility is regulated via a complex set of post-translational modifications of histones, also called histone code, and nucleosome remodeling. In Mus musculus (Mouse), this protein is Histone H2B type 1-H.